The primary structure comprises 109 residues: Flagellar hook-basal body complex protein FliE (109 aa).

The protein belongs to the FliE family.

The protein resides in the bacterial flagellum basal body. The sequence is that of Flagellar hook-basal body complex protein FliE from Pseudomonas paraeruginosa (strain DSM 24068 / PA7) (Pseudomonas aeruginosa (strain PA7)).